Here is a 144-residue protein sequence, read N- to C-terminus: SsrA-binding protein (144 aa).

It belongs to the SmpB family.

Its subcellular location is the cytoplasm. Its function is as follows. Required for rescue of stalled ribosomes mediated by trans-translation. Binds to transfer-messenger RNA (tmRNA), required for stable association of tmRNA with ribosomes. tmRNA and SmpB together mimic tRNA shape, replacing the anticodon stem-loop with SmpB. tmRNA is encoded by the ssrA gene; the 2 termini fold to resemble tRNA(Ala) and it encodes a 'tag peptide', a short internal open reading frame. During trans-translation Ala-aminoacylated tmRNA acts like a tRNA, entering the A-site of stalled ribosomes, displacing the stalled mRNA. The ribosome then switches to translate the ORF on the tmRNA; the nascent peptide is terminated with the 'tag peptide' encoded by the tmRNA and targeted for degradation. The ribosome is freed to recommence translation, which seems to be the essential function of trans-translation. The sequence is that of SsrA-binding protein from Thermus thermophilus (strain ATCC BAA-163 / DSM 7039 / HB27).